We begin with the raw amino-acid sequence, 35 residues long: MEALVYTFLLVSTLGIIFFAIFFREPPKVPTKNTK.

A helical transmembrane segment spans residues 3–23 (ALVYTFLLVSTLGIIFFAIFF).

Belongs to the PsbT family. PSII is composed of 1 copy each of membrane proteins PsbA, PsbB, PsbC, PsbD, PsbE, PsbF, PsbH, PsbI, PsbJ, PsbK, PsbL, PsbM, PsbT, PsbY, PsbZ, Psb30/Ycf12, at least 3 peripheral proteins of the oxygen-evolving complex and a large number of cofactors. It forms dimeric complexes.

The protein localises to the plastid. It is found in the chloroplast thylakoid membrane. Found at the monomer-monomer interface of the photosystem II (PS II) dimer, plays a role in assembly and dimerization of PSII. PSII is a light-driven water plastoquinone oxidoreductase, using light energy to abstract electrons from H(2)O, generating a proton gradient subsequently used for ATP formation. The chain is Photosystem II reaction center protein T from Pisum sativum (Garden pea).